The following is a 463-amino-acid chain: Chaperone SurA (463 aa).

An N-terminal signal peptide occupies residues 1 to 25; the sequence is MTRYFSIVLSLLLAVSCVFLPVASA. 2 PpiC domains span residues 175–277 and 291–390; these read GAQY…KLVE and ATEY…QRLG. A disordered region spans residues 439 to 463; it reads ADDHHTPSAAVTPATGAVLPAATKH.

The protein localises to the periplasm. It carries out the reaction [protein]-peptidylproline (omega=180) = [protein]-peptidylproline (omega=0). Chaperone involved in the correct folding and assembly of outer membrane proteins. Recognizes specific patterns of aromatic residues and the orientation of their side chains, which are found more frequently in integral outer membrane proteins. May act in both early periplasmic and late outer membrane-associated steps of protein maturation. This Xylella fastidiosa (strain Temecula1 / ATCC 700964) protein is Chaperone SurA.